The sequence spans 357 residues: RNA-binding protein 43 (357 aa).

The RRM domain maps to 15 to 104 (RTVVVAGLPV…VSLRVSHFGD (90 aa)).

The protein is RNA-binding protein 43 (RBM43) of Homo sapiens (Human).